The following is a 1562-amino-acid chain: Cell wall protein RBR3 (1562 aa).

A signal peptide spans 1 to 20; that stretch reads MIIFRKSFFTFWLLLNSVLA. Asn-190 carries N-linked (GlcNAc...) asparagine glycosylation. Residues 338-353 show a composition bias toward low complexity; sequence APGTNPTEYTTTITTT. The tract at residues 338–366 is disordered; that stretch reads APGTNPTEYTTTITTTNSAGKPLTETGVV. Residue Asn-373 is glycosylated (N-linked (GlcNAc...) asparagine). Low complexity-rich tracts occupy residues 383-415 and 422-729; these read FPTS…SQPS and SSSK…ISAT. Disordered stretches follow at residues 383-729, 1404-1424, and 1455-1486; these read FPTS…ISAT, GSGS…SSSN, and YSSG…GNSN. Residues Asn-602, Asn-679, and Asn-705 are each glycosylated (N-linked (GlcNAc...) asparagine). The span at 1407–1419 shows a compositional bias: gly residues; the sequence is SDSGSGSGSGSGS. Positions 1468 to 1486 are enriched in polar residues; sequence GANNVGSNQTPTVSGGNSN. A lipid anchor (GPI-anchor amidated asparagine) is attached at Asn-1538. The propeptide at 1539–1562 is removed in mature form; it reads SGSKFSVGKSAFIAIILTTFIGFI.

It belongs to the HYR1/IFF family. In terms of processing, the GPI-anchor is attached to the protein in the endoplasmic reticulum and serves to target the protein to the cell surface. There, the glucosamine-inositol phospholipid moiety is cleaved off and the GPI-modified mannoprotein is covalently attached via its lipidless GPI glycan remnant to the 1,6-beta-glucan of the outer cell wall layer.

It localises to the secreted. The protein resides in the cell wall. It is found in the membrane. Functionally, GPI-anchored cell wall protein involved in cell wall organization, hyphal growth, as well as in host-fungal interaction and virulence. This is Cell wall protein RBR3 (RBR3) from Candida albicans (strain SC5314 / ATCC MYA-2876) (Yeast).